A 324-amino-acid polypeptide reads, in one-letter code: Thiazole synthase (324 aa).

Catalysis depends on Lys167, which acts as the Schiff-base intermediate with DXP. Residues Gly228, 254-255, and 276-277 each bind 1-deoxy-D-xylulose 5-phosphate; these read AG and NT.

This sequence belongs to the ThiG family. Homotetramer. Forms heterodimers with either ThiH or ThiS.

The protein localises to the cytoplasm. It carries out the reaction [ThiS sulfur-carrier protein]-C-terminal-Gly-aminoethanethioate + 2-iminoacetate + 1-deoxy-D-xylulose 5-phosphate = [ThiS sulfur-carrier protein]-C-terminal Gly-Gly + 2-[(2R,5Z)-2-carboxy-4-methylthiazol-5(2H)-ylidene]ethyl phosphate + 2 H2O + H(+). The protein operates within cofactor biosynthesis; thiamine diphosphate biosynthesis. Catalyzes the rearrangement of 1-deoxy-D-xylulose 5-phosphate (DXP) to produce the thiazole phosphate moiety of thiamine. Sulfur is provided by the thiocarboxylate moiety of the carrier protein ThiS. In vitro, sulfur can be provided by H(2)S. In Paramagnetospirillum magneticum (strain ATCC 700264 / AMB-1) (Magnetospirillum magneticum), this protein is Thiazole synthase.